We begin with the raw amino-acid sequence, 261 residues long: Lysosome-associated membrane glycoprotein 5 (261 aa).

The N-terminal stretch at 1–29 (MDLQGRAVPSVDRLRVLLMLFHTMAQIMA) is a signal peptide. Residues 30 to 234 (EQEVENLSGL…AVDEREQLEE (205 aa)) are Extracellular-facing. 3 N-linked (GlcNAc...) asparagine glycosylation sites follow: N35, N53, and N126. The helical transmembrane segment at 235 to 255 (TLPLILGLILGLVIVVTLAIY) threads the bilayer. Topologically, residues 256–261 (HVHPQK) are cytoplasmic.

Belongs to the LAMP family. Post-translationally, glycosylated.

It localises to the cytoplasmic vesicle membrane. The protein localises to the cell membrane. Its subcellular location is the cell projection. It is found in the dendrite. The protein resides in the cytoplasmic vesicle. It localises to the secretory vesicle. The protein localises to the synaptic vesicle membrane. Its subcellular location is the growth cone membrane. It is found in the early endosome membrane. The protein resides in the recycling endosome. It localises to the endoplasmic reticulum-Golgi intermediate compartment membrane. The protein localises to the endosome membrane. Functionally, plays a role in short-term synaptic plasticity in a subset of GABAergic neurons in the brain. In Pongo abelii (Sumatran orangutan), this protein is Lysosome-associated membrane glycoprotein 5 (LAMP5).